The chain runs to 954 residues: Glycine dehydrogenase (decarboxylating) (954 aa).

At Lys704 the chain carries N6-(pyridoxal phosphate)lysine.

It belongs to the GcvP family. The glycine cleavage system is composed of four proteins: P, T, L and H. Requires pyridoxal 5'-phosphate as cofactor.

The enzyme catalyses N(6)-[(R)-lipoyl]-L-lysyl-[glycine-cleavage complex H protein] + glycine + H(+) = N(6)-[(R)-S(8)-aminomethyldihydrolipoyl]-L-lysyl-[glycine-cleavage complex H protein] + CO2. In terms of biological role, the glycine cleavage system catalyzes the degradation of glycine. The P protein binds the alpha-amino group of glycine through its pyridoxal phosphate cofactor; CO(2) is released and the remaining methylamine moiety is then transferred to the lipoamide cofactor of the H protein. This chain is Glycine dehydrogenase (decarboxylating), found in Rhizobium etli (strain CIAT 652).